Reading from the N-terminus, the 252-residue chain is Small ribosomal subunit protein uS3 (252 aa).

The region spanning 16 to 85 is the KH type-2 domain; sequence IDEYLETKLE…NPQVEVKEVD (70 aa). Residues 233-252 form a disordered region; that stretch reads EESEIEEITEEIEDVETLEE.

This sequence belongs to the universal ribosomal protein uS3 family. As to quaternary structure, part of the 30S ribosomal subunit.

Functionally, binds the lower part of the 30S subunit head. The polypeptide is Small ribosomal subunit protein uS3 (Methanosphaera stadtmanae (strain ATCC 43021 / DSM 3091 / JCM 11832 / MCB-3)).